The sequence spans 509 residues: Transmembrane protein 104 homolog (509 aa).

The Cytoplasmic segment spans residues 1–19 (MPRLVNGREAAPTYSNLVG). Residues 20 to 40 (FIFIFNLIVGTGALTLPGVFA) traverse the membrane as a helical segment. At 41–45 (RAGWM) the chain is on the extracellular side. Residues 46–66 (LSLIVIVLLAIISYMTVTFII) traverse the membrane as a helical segment. Topologically, residues 67 to 151 (EAMACANAIR…ATLFFNEFGR (85 aa)) are cytoplasmic. The chain crosses the membrane as a helical span at residues 152–172 (VMFYLCLIVYLYGDLSIYSAA). The Extracellular segment spans residues 173–218 (VARSLRDVVCDQTNGTDTNNLMYWPGDFENNTSLACWKEHTISRLN). 3 N-linked (GlcNAc...) asparagine glycosylation sites follow: Asn-186, Asn-202, and Asn-203. Residues 219–239 (MYRVLLIGFTLIFGPFVYFNV) form a helical membrane-spanning segment. Residues 240 to 248 (QKTKYLQML) are Cytoplasmic-facing. The chain crosses the membrane as a helical span at residues 249–269 (TAAFRWMAFTLMICISLKLLI). Over 270 to 277 (SRGAKGHP) the chain is Extracellular. Residues 278–298 (ATFNVYGIPSLFGACVYSFMC) traverse the membrane as a helical segment. Topologically, residues 299–320 (HHSLPSLLAPIRHKSMVSKILS) are cytoplasmic. A helical membrane pass occupies residues 321–341 (IDYIIICAFYILLAMTGIFAF). Topologically, residues 342–361 (ERIEDLYTLDFLPYDVAYVD) are extracellular. Residues 362–382 (FWSGLLICIDYFLALFPIFTL) traverse the membrane as a helical segment. Residues 383 to 411 (STSFPIVAITLKNNLQSLFLDMSQYESYS) lie on the Cytoplasmic side of the membrane. Residues 412–432 (VILRLCFPLLAIIPPFCITYF) traverse the membrane as a helical segment. The Extracellular portion of the chain corresponds to 433–439 (TESLSSL). Residues 440–460 (VAFTGTYAGTGIQYIIPVFLV) form a helical membrane-spanning segment. The Cytoplasmic segment spans residues 461-487 (YFARRTCSELLGSGVVNRFKSPFKSSA). The chain crosses the membrane as a helical span at residues 488–508 (WLVFVFIWSILCVCLVSINLF). Ser-509 is a topological domain (extracellular).

The protein belongs to the TMEM104 family.

The protein localises to the membrane. This Drosophila melanogaster (Fruit fly) protein is Transmembrane protein 104 homolog.